The sequence spans 105 residues: Heme oxygenase (mycobilin-producing) (105 aa).

One can recognise an ABM domain in the interval 3–92 (VVKINAIEVP…VATGASLLEF (90 aa)). Residues 22–26 (RFAHR), histidine 75, and 83–86 (VATG) each bind heme.

It belongs to the antibiotic biosynthesis monooxygenase family. In terms of assembly, homodimer.

The catalysed reaction is heme b + 3 AH2 + 3 O2 + 2 H(+) = mycobilin a + Fe(2+) + 3 A + 3 H2O. It carries out the reaction heme b + 3 AH2 + 3 O2 + 2 H(+) = mycobilin b + Fe(2+) + 3 A + 3 H2O. Its function is as follows. Catalyzes the oxidative degradation of the heme macrocyclic porphyrin ring in the presence of a suitable electron donor such as ascorbate or NADPH--cytochrome P450 reductase, with subsequent release of free iron. This chain is Heme oxygenase (mycobilin-producing) (mhuD), found in Mycobacterium tuberculosis (strain CDC 1551 / Oshkosh).